The primary structure comprises 361 residues: Aromatic amino acid aminotransferase (361 aa).

Position 221 is an N6-(pyridoxal phosphate)lysine (K221).

It belongs to the class-II pyridoxal-phosphate-dependent aminotransferase family. As to quaternary structure, homodimer. The cofactor is pyridoxal 5'-phosphate.

The catalysed reaction is an aromatic L-alpha-amino acid + 2-oxoglutarate = an aromatic oxo-acid + L-glutamate. Its function is as follows. Aminotransferase that catalyzes the conversion of aromatic amino acids and 2-oxoglutarate into corresponding aromatic oxo acids and L-glutamate. In Mycobacterium ulcerans (strain Agy99), this protein is Aromatic amino acid aminotransferase.